The following is a 37-amino-acid chain: Large ribosomal subunit protein bL36A (37 aa).

This sequence belongs to the bacterial ribosomal protein bL36 family.

This Actinobacillus pleuropneumoniae serotype 3 (strain JL03) protein is Large ribosomal subunit protein bL36A.